Here is a 197-residue protein sequence, read N- to C-terminus: UPF0301 protein A2cp1_4106 (197 aa).

Belongs to the UPF0301 (AlgH) family.

This Anaeromyxobacter dehalogenans (strain 2CP-1 / ATCC BAA-258) protein is UPF0301 protein A2cp1_4106.